A 358-amino-acid polypeptide reads, in one-letter code: Mitogen-activated protein kinase hog-1 (358 aa).

In terms of domain architecture, Protein kinase spans 20–299; it reads YSDLQPVGMG…ATEALSHEYL (280 aa). ATP contacts are provided by residues 26–34 and lysine 49; that span reads VGMGAFGLV. Aspartate 141 acts as the Proton acceptor in catalysis. Threonine 171 is subject to Phosphothreonine. The TXY signature appears at 171–173; the sequence is TGY. The residue at position 173 (tyrosine 173) is a Phosphotyrosine.

It belongs to the protein kinase superfamily. Ser/Thr protein kinase family. MAP kinase subfamily. HOG1 sub-subfamily. It depends on Mg(2+) as a cofactor. Post-translationally, dually phosphorylated on Thr-171 and Tyr-173, which activates the enzyme. Phosphorylation is induced by fungicides and osmotic stress.

It localises to the cytoplasm. It is found in the nucleus. It catalyses the reaction L-seryl-[protein] + ATP = O-phospho-L-seryl-[protein] + ADP + H(+). The catalysed reaction is L-threonyl-[protein] + ATP = O-phospho-L-threonyl-[protein] + ADP + H(+). With respect to regulation, activated by tyrosine and threonine phosphorylation. Proline-directed serine/threonine-protein kinase involved in a signal transduction pathway that is activated by changes in the osmolarity of the extracellular environment. Controls osmotic regulation of transcription of target genes. Involved in ion flux-mediated turgor regulation. The polypeptide is Mitogen-activated protein kinase hog-1 (hog-1) (Neurospora crassa (strain ATCC 24698 / 74-OR23-1A / CBS 708.71 / DSM 1257 / FGSC 987)).